The following is a 209-amino-acid chain: Uracil phosphoribosyltransferase (209 aa).

Residues R79, R104, and 131–139 (DPMLATGGS) each bind 5-phospho-alpha-D-ribose 1-diphosphate. Residues I194 and 199–201 (GDA) each bind uracil. D200 serves as a coordination point for 5-phospho-alpha-D-ribose 1-diphosphate.

It belongs to the UPRTase family. Mg(2+) is required as a cofactor.

The enzyme catalyses UMP + diphosphate = 5-phospho-alpha-D-ribose 1-diphosphate + uracil. It participates in pyrimidine metabolism; UMP biosynthesis via salvage pathway; UMP from uracil: step 1/1. With respect to regulation, allosterically activated by GTP. Catalyzes the conversion of uracil and 5-phospho-alpha-D-ribose 1-diphosphate (PRPP) to UMP and diphosphate. The sequence is that of Uracil phosphoribosyltransferase from Lysinibacillus sphaericus (strain C3-41).